A 920-amino-acid polypeptide reads, in one-letter code: Bifunctional aspartokinase/homoserine dehydrogenase 1, chloroplastic (920 aa).

A disordered region spans residues 1–21 (MRSLTVASRHPGAAFSTRRRP). The transit peptide at 1-92 (MRSLTVASRH…EAIADLPKGD (92 aa)) directs the protein to the chloroplast. Residues 93–341 (MWSVHKFGGT…VSEAVILSTL (249 aa)) form an aspartokinase region. Residues 342-566 (SYQEAWEMSY…LSKTTLAVGI (225 aa)) form an interface region. 2 ACT domains span residues 416–491 (VEGT…VIHN) and 497–574 (TVGL…LIGR). The homoserine dehydrogenase stretch occupies residues 567-920 (IGPGLIGRTL…RLSSYLGAPS (354 aa)). Ile572 and Ala601 together coordinate NAD(+). An NADP(+)-binding site is contributed by Ile572. Position 572 (Ile572) interacts with NADPH. The NADP(+) site is built by Arg604, Thr653, and Lys677. Position 653 (Thr653) interacts with NAD(+). The NADPH site is built by Thr653 and Lys677. Na(+) is bound by residues Glu704, Val707, Ala709, and Leu711. Residues Gly762 and Glu765 each coordinate NADP(+). Residues Glu765 and Asp776 each contribute to the L-homoserine site. Residue Lys780 is the Proton donor of the active site. Gly897 contacts NAD(+). Gly897 serves as a coordination point for NADP(+). NADPH is bound at residue Gly897.

The protein in the N-terminal section; belongs to the aspartokinase family. In the C-terminal section; belongs to the homoserine dehydrogenase family. In terms of assembly, homo- or heterodimer. A metal cation is required as a cofactor.

The protein resides in the plastid. It is found in the chloroplast. It carries out the reaction L-homoserine + NADP(+) = L-aspartate 4-semialdehyde + NADPH + H(+). It catalyses the reaction L-homoserine + NAD(+) = L-aspartate 4-semialdehyde + NADH + H(+). The catalysed reaction is L-aspartate + ATP = 4-phospho-L-aspartate + ADP. It functions in the pathway amino-acid biosynthesis; L-lysine biosynthesis via DAP pathway; (S)-tetrahydrodipicolinate from L-aspartate: step 1/4. The protein operates within amino-acid biosynthesis; L-methionine biosynthesis via de novo pathway; L-homoserine from L-aspartate: step 1/3. Its pathway is amino-acid biosynthesis; L-methionine biosynthesis via de novo pathway; L-homoserine from L-aspartate: step 3/3. It participates in amino-acid biosynthesis; L-threonine biosynthesis; L-threonine from L-aspartate: step 1/5. It functions in the pathway amino-acid biosynthesis; L-threonine biosynthesis; L-threonine from L-aspartate: step 3/5. Bifunctional aspartate kinase and homoserine dehydrogenase that catalyzes the first and the third steps toward the synthesis of lysine, methionine and threonine from aspartate. This is Bifunctional aspartokinase/homoserine dehydrogenase 1, chloroplastic (AKHSDH1) from Zea mays (Maize).